The chain runs to 162 residues: Sorting nexin-3 (162 aa).

Alanine 2 is subject to N-acetylalanine. One can recognise a PX domain in the interval 27–151 (NFLEIDVSNP…HMFLQDEIID (125 aa)). At arginine 43 the chain carries Omega-N-methylarginine. Residues arginine 70, serine 72, lysine 95, and arginine 118 each coordinate a 1,2-diacyl-sn-glycero-3-phospho-(1D-myo-inositol-3-phosphate). Serine 72 carries the post-translational modification Phosphoserine. Lysine 95 is covalently cross-linked (Glycyl lysine isopeptide (Lys-Gly) (interchain with G-Cter in SUMO2)). A binds predominantly to PtdIns(P5) and weaker to PtdIns(P3) abd PtdIns(P4); involved in neurite outgrowth regulation region spans residues 147-162 (DEIIDKSYTPSKIRHA).

Belongs to the sorting nexin family. As to quaternary structure, interacts with VPS26A, VPS29. Interacts with VPS35; the interaction with VPS35 is direct. The association with the retromer CSC subcomplex subunits is proposed to represent a functional distinct retromer variant described as SNX3-retromer complex. Interacts with USP10 and SCNN1A. Interacts with TRFC. Interacts with SNX8; 2 molecules of SNX8 seems to associate with one molecule of SNX3. Interacts with PTPRU. Interacts with MON2 and DOP1B. Post-translationally, ubiquitinated, leading to its proteasomal degradation. Deubiquitinated by USP10. As to expression, highly expressed in developing red cells and hematopoietic tissues.

The protein localises to the early endosome. Its subcellular location is the cytoplasmic vesicle. It localises to the phagosome. Functionally, phosphoinositide-binding protein required for multivesicular body formation. Specifically binds phosphatidylinositol 3-phosphate (PtdIns(P3)). Can also bind phosphatidylinositol 4-phosphate (PtdIns(P4)), phosphatidylinositol 5-phosphate (PtdIns(P5)) and phosphatidylinositol 3,5-biphosphate (PtdIns(3,5)P2). Plays a role in protein transport between cellular compartments. Together with RAB7A facilitates endosome membrane association of the retromer cargo-selective subcomplex (CSC). May act in part as component of the SNX3-retromer complex which mediates the retrograde endosome-to-TGN transport of WLS distinct from the SNX-BAR retromer pathway. Promotes stability and cell surface expression of epithelial sodium channel (ENAC) subunits SCNN1A and SCNN1G. Not involved in EGFR degradation. Involved in the regulation of phagocytosis in dendritic cells possibly by regulating EEA1 recruitment to the nascent phagosomes. Involved in iron homeostasis through regulation of endocytic recycling of the transferrin receptor Tfrc presuambly by delivering the transferrin:transferrin receptor complex to recycling endosomes; the function may involve the CSC retromer subcomplex. Involved in regulation of neurite outgrowth in primary neurons. The polypeptide is Sorting nexin-3 (Snx3) (Mus musculus (Mouse)).